Consider the following 294-residue polypeptide: Aquaporin-B (294 aa).

The tract at residues methionine 1 to proline 31 is disordered. At methionine 1–arginine 42 the chain is on the cytoplasmic side. Basic and acidic residues predominate over residues glycine 22–proline 31. The chain crosses the membrane as a helical span at residues tryptophan 43–leucine 63. The Extracellular segment spans residues cysteine 64–proline 79. A glycan (O-linked (GalNAc...) serine) is linked at serine 75. The helical transmembrane segment at valine 80–valine 100 threads the bilayer. Over serine 101–lysine 123 the chain is Cytoplasmic. The NPA 1 motif lies at asparagine 106 to alanine 108. Residues glycine 124–alanine 144 form a helical membrane-spanning segment. Topologically, residues threonine 145–asparagine 172 are extracellular. The chain crosses the membrane as a helical span at residues alanine 173–phenylalanine 193. Topologically, residues aspartate 194–alanine 224 are cytoplasmic. The interval serine 208–serine 219 is required for water permeability. The helical transmembrane segment at glycine 225–valine 245 threads the bilayer. The Extracellular segment spans residues serine 246 to histidine 268. The NPA 2 motif lies at asparagine 251–alanine 253. A helical membrane pass occupies residues tryptophan 269 to phenylalanine 289. At serine 290 to lysine 294 the chain is on the cytoplasmic side.

It belongs to the MIP/aquaporin (TC 1.A.8) family. In terms of processing, glycosylated and non-glycosylated forms exist throughout all developmental stages.

The protein localises to the cell membrane. It is found in the cytoplasmic vesicle. Functionally, putatively gated water-specific channel, requiring a cysteine residue within the channel. Impermeable to water, glycerol and urea when expressed in Xenopus oocytes. Not regulated by pH; channels remain impermeable to water at pH 7.4 and 5.2. This Dictyostelium discoideum (Social amoeba) protein is Aquaporin-B.